Consider the following 525-residue polypeptide: uncharacterized protein (525 aa).

2 stretches are compositionally biased toward polar residues: residues 139 to 149 (LNSTPDKTQAG) and 336 to 349 (SGKT…HTTS). Disordered stretches follow at residues 139–158 (LNST…HQAP) and 330–356 (PAPA…PYAT).

This is an uncharacterized protein from Treponema pallidum (strain Nichols).